The sequence spans 265 residues: Apolipoprotein A-I (265 aa).

Residues 1-18 (MKAVLLTLAVLFLTGSQA) form the signal peptide. 2 repeat units span residues 67 to 88 (LKLL…EQLG) and 89 to 110 (PVTQ…QEMN). A 10 X approximate tandem repeats region spans residues 67–265 (LKLLDNWDSL…DEASKKLNAQ (199 aa)). M109 carries the methionine sulfoxide modification. The 3; half-length repeat unit spans residues 111–121 (KDLEEVKQKVQ). 5 repeat units span residues 122–142 (PYLD…RQKV), 144–165 (PLGE…DKLT), 166–187 (PLAE…QQLA), 188–209 (PYSD…AGGG), and 210–230 (SLAE…EKAK). The stretch at 231-241 (PALEDLRQGLV) is one 9; half-length repeat. Copy 10 of the repeat occupies 242 to 265 (PVLESLKVSILAAIDEASKKLNAQ).

It belongs to the apolipoprotein A1/A4/E family. Homodimer. Interacts with APOA1BP and CLU. Component of a sperm activating protein complex (SPAP), consisting of APOA1, an immunoglobulin heavy chain, an immunoglobulin light chain and albumin. Interacts with NDRG1. Interacts with SCGB3A2. Interacts with NAXE and YJEFN3. In terms of processing, glycosylated. Post-translationally, palmitoylated. Phosphorylation sites are present in the extracellular medium. Major protein of plasma HDL, also found in chylomicrons.

The protein resides in the secreted. Its function is as follows. Participates in the reverse transport of cholesterol from tissues to the liver for excretion by promoting cholesterol efflux from tissues and by acting as a cofactor for the lecithin cholesterol acyltransferase (LCAT). As part of the SPAP complex, activates spermatozoa motility. This chain is Apolipoprotein A-I (APOA1), found in Tursiops truncatus (Atlantic bottle-nosed dolphin).